The sequence spans 260 residues: Phosphate import ATP-binding protein PstB 5 (260 aa).

The ABC transporter domain occupies 9-255; sequence IKVKDLSFYY…PLDSRTRDYV (247 aa). An ATP-binding site is contributed by 41–48; that stretch reads GPSGCGKS.

This sequence belongs to the ABC transporter superfamily. Phosphate importer (TC 3.A.1.7) family. In terms of assembly, the complex is composed of two ATP-binding proteins (PstB), two transmembrane proteins (PstC and PstA) and a solute-binding protein (PstS).

It is found in the cell inner membrane. It catalyses the reaction phosphate(out) + ATP + H2O = ADP + 2 phosphate(in) + H(+). In terms of biological role, part of the ABC transporter complex PstSACB involved in phosphate import. Responsible for energy coupling to the transport system. This chain is Phosphate import ATP-binding protein PstB 5, found in Trichormus variabilis (strain ATCC 29413 / PCC 7937) (Anabaena variabilis).